The following is a 126-amino-acid chain: Protein K7 (126 aa).

A helical transmembrane segment spans residues 24 to 44 (LPLHLWILCSLLAFLPLLVFI).

In terms of assembly, interacts with host CAMLG; this interaction allows efficient apoptosis inhibition. Additionally, interacts with vGPCR/ORF74 and induces its proteasomeal degradation.

The protein resides in the host membrane. It is found in the host mitochondrion. Plays a role in the inhibition of host apoptosis to allow completion of the viral lytic replication and may thus favor the maintenance of persistent infection in infected host. This is Protein K7 (K7) from Homo sapiens (Human).